A 549-amino-acid polypeptide reads, in one-letter code: DNA polymerase lambda (549 aa).

One can recognise a BRCT domain in the interval 17-116 (DPDGMFRGVS…ERLPEHKFAI (100 aa)). Positions 126-197 (KEGGAAGSGV…ASGDSKETIA (72 aa)) are disordered. Basic and acidic residues predominate over residues 149–175 (PENRKETAGGNRESRDAIAHPNEDSDV). A compositionally biased stretch (polar residues) spans 180–197 (STCTSSQSASGDSKETIA). Residues 233-247 (NIYRALGDDRRSFSY) form a DNA-binding region. Histidine 280 is a catalytic residue. A DNA-binding region spans residues 315-318 (GPAT). Residues arginine 356, 387-390 (SYRR), and 396-399 (GDMD) contribute to the dCTP site. Residues 390–399 (RGKSSCGDMD) form an involved in primer binding region. The Mn(2+) site is built by aspartate 397, aspartate 399, and aspartate 464. Residues 438–479 (IEGTDCGVDTYFGLCTYPGRELRHRIDLKVYPRNRHAFGLLA) are DNA-binding. A dCTP-binding site is contributed by asparagine 487.

It belongs to the DNA polymerase type-X family. In terms of assembly, interacts with PCNA. Mn(2+) is required as a cofactor. Expressed in proliferating tissues. Expressed in roots, root apex, young leaves, shoot apical meristem (SAM), flag leaves and panicles.

The protein localises to the nucleus. The enzyme catalyses DNA(n) + a 2'-deoxyribonucleoside 5'-triphosphate = DNA(n+1) + diphosphate. Functionally, repair polymerase involved in base excision repair (BER) and responsible for repair of lesions that give rise to abasic (AP) sites in DNA. Has both DNA polymerase and terminal transferase activities. Has a 5'-deoxyribose-5-phosphate lyase (dRP lyase) activity. In Oryza sativa subsp. japonica (Rice), this protein is DNA polymerase lambda.